We begin with the raw amino-acid sequence, 151 residues long: Flagellar assembly factor FliW (151 aa).

It belongs to the FliW family. Interacts with translational regulator CsrA and flagellin(s).

It localises to the cytoplasm. Acts as an anti-CsrA protein, binds CsrA and prevents it from repressing translation of its target genes, one of which is flagellin. Binds to flagellin and participates in the assembly of the flagellum. The chain is Flagellar assembly factor FliW from Lachnospira eligens (strain ATCC 27750 / DSM 3376 / VPI C15-48 / C15-B4) (Eubacterium eligens).